The chain runs to 219 residues: Thiamine-phosphate synthase (219 aa).

4-amino-2-methyl-5-(diphosphooxymethyl)pyrimidine contacts are provided by residues 44–48 (QFREK) and N79. 2 residues coordinate Mg(2+): D80 and D99. S117 lines the 4-amino-2-methyl-5-(diphosphooxymethyl)pyrimidine pocket. Residue 143 to 145 (TST) coordinates 2-[(2R,5Z)-2-carboxy-4-methylthiazol-5(2H)-ylidene]ethyl phosphate. A 4-amino-2-methyl-5-(diphosphooxymethyl)pyrimidine-binding site is contributed by K146. Residues G175 and 195–196 (IS) each bind 2-[(2R,5Z)-2-carboxy-4-methylthiazol-5(2H)-ylidene]ethyl phosphate.

The protein belongs to the thiamine-phosphate synthase family. Requires Mg(2+) as cofactor.

It carries out the reaction 2-[(2R,5Z)-2-carboxy-4-methylthiazol-5(2H)-ylidene]ethyl phosphate + 4-amino-2-methyl-5-(diphosphooxymethyl)pyrimidine + 2 H(+) = thiamine phosphate + CO2 + diphosphate. The catalysed reaction is 2-(2-carboxy-4-methylthiazol-5-yl)ethyl phosphate + 4-amino-2-methyl-5-(diphosphooxymethyl)pyrimidine + 2 H(+) = thiamine phosphate + CO2 + diphosphate. It catalyses the reaction 4-methyl-5-(2-phosphooxyethyl)-thiazole + 4-amino-2-methyl-5-(diphosphooxymethyl)pyrimidine + H(+) = thiamine phosphate + diphosphate. The protein operates within cofactor biosynthesis; thiamine diphosphate biosynthesis; thiamine phosphate from 4-amino-2-methyl-5-diphosphomethylpyrimidine and 4-methyl-5-(2-phosphoethyl)-thiazole: step 1/1. Its function is as follows. Condenses 4-methyl-5-(beta-hydroxyethyl)thiazole monophosphate (THZ-P) and 2-methyl-4-amino-5-hydroxymethyl pyrimidine pyrophosphate (HMP-PP) to form thiamine monophosphate (TMP). This Bacillus thuringiensis subsp. konkukian (strain 97-27) protein is Thiamine-phosphate synthase.